Consider the following 392-residue polypeptide: Probable nucleoredoxin 3 (392 aa).

2 Thioredoxin domains span residues 17-171 (LYSI…DSKR) and 177-326 (EKLL…ELKA).

It belongs to the nucleoredoxin family.

It carries out the reaction [protein]-dithiol + NAD(+) = [protein]-disulfide + NADH + H(+). It catalyses the reaction [protein]-dithiol + NADP(+) = [protein]-disulfide + NADPH + H(+). In terms of biological role, probable thiol-disulfide oxidoreductase that may participate in various redox reactions. The polypeptide is Probable nucleoredoxin 3 (Arabidopsis thaliana (Mouse-ear cress)).